Consider the following 266-residue polypeptide: UPF0294 protein YafD (266 aa).

The protein belongs to the UPF0294 family.

The protein resides in the cytoplasm. In Shigella dysenteriae serotype 1 (strain Sd197), this protein is UPF0294 protein YafD.